The sequence spans 291 residues: ATP synthase gamma chain (291 aa).

This sequence belongs to the ATPase gamma chain family. In terms of assembly, F-type ATPases have 2 components, CF(1) - the catalytic core - and CF(0) - the membrane proton channel. CF(1) has five subunits: alpha(3), beta(3), gamma(1), delta(1), epsilon(1). CF(0) has three main subunits: a, b and c.

It is found in the cell inner membrane. Functionally, produces ATP from ADP in the presence of a proton gradient across the membrane. The gamma chain is believed to be important in regulating ATPase activity and the flow of protons through the CF(0) complex. This is ATP synthase gamma chain from Methylibium petroleiphilum (strain ATCC BAA-1232 / LMG 22953 / PM1).